We begin with the raw amino-acid sequence, 1057 residues long: Carbamoyl phosphate synthase large chain (1057 aa).

The carboxyphosphate synthetic domain stretch occupies residues 1 to 401 (MPKRNDIKTI…SLLKAIRSLE (401 aa)). ATP contacts are provided by Arg129, Arg169, Gly175, Gly176, Lys208, Ile210, Glu215, Gly241, Ile242, His243, Gln284, and Glu298. Residues 133–327 (RTLMNDLNVP…IAKLAAKIAV (195 aa)) form the ATP-grasp 1 domain. 3 residues coordinate Mg(2+): Gln284, Glu298, and Asn300. Positions 284, 298, and 300 each coordinate Mn(2+). Residues 402-546 (YGVHHLGLPN…YGTYETENES (145 aa)) are oligomerization domain. The interval 547-929 (IVTDKEKILV…ALFKGLTGSG (383 aa)) is carbamoyl phosphate synthetic domain. In terms of domain architecture, ATP-grasp 2 spans 671–861 (EALLRKINVP…MAQLAMRAII (191 aa)). Residues Arg707, Arg746, Leu748, Glu752, Gly777, Val778, His779, Ser780, Gln820, and Glu832 each contribute to the ATP site. Gln820, Glu832, and Asn834 together coordinate Mg(2+). Mn(2+) is bound by residues Gln820, Glu832, and Asn834. The 128-residue stretch at 930–1057 (VEVKDHGTVL…ESMTFTMRQM (128 aa)) folds into the MGS-like domain. Positions 930 to 1057 (VEVKDHGTVL…ESMTFTMRQM (128 aa)) are allosteric domain.

Belongs to the CarB family. As to quaternary structure, composed of two chains; the small (or glutamine) chain promotes the hydrolysis of glutamine to ammonia, which is used by the large (or ammonia) chain to synthesize carbamoyl phosphate. Tetramer of heterodimers (alpha,beta)4. It depends on Mg(2+) as a cofactor. Mn(2+) serves as cofactor.

It carries out the reaction hydrogencarbonate + L-glutamine + 2 ATP + H2O = carbamoyl phosphate + L-glutamate + 2 ADP + phosphate + 2 H(+). The enzyme catalyses hydrogencarbonate + NH4(+) + 2 ATP = carbamoyl phosphate + 2 ADP + phosphate + 2 H(+). The protein operates within amino-acid biosynthesis; L-arginine biosynthesis; carbamoyl phosphate from bicarbonate: step 1/1. It functions in the pathway pyrimidine metabolism; UMP biosynthesis via de novo pathway; (S)-dihydroorotate from bicarbonate: step 1/3. Its function is as follows. Large subunit of the glutamine-dependent carbamoyl phosphate synthetase (CPSase). CPSase catalyzes the formation of carbamoyl phosphate from the ammonia moiety of glutamine, carbonate, and phosphate donated by ATP, constituting the first step of 2 biosynthetic pathways, one leading to arginine and/or urea and the other to pyrimidine nucleotides. The large subunit (synthetase) binds the substrates ammonia (free or transferred from glutamine from the small subunit), hydrogencarbonate and ATP and carries out an ATP-coupled ligase reaction, activating hydrogencarbonate by forming carboxy phosphate which reacts with ammonia to form carbamoyl phosphate. This Staphylococcus aureus (strain Mu3 / ATCC 700698) protein is Carbamoyl phosphate synthase large chain.